A 103-amino-acid chain; its full sequence is Large ribosomal subunit protein bL21 (103 aa).

It belongs to the bacterial ribosomal protein bL21 family. Part of the 50S ribosomal subunit. Contacts protein L20.

This protein binds to 23S rRNA in the presence of protein L20. The chain is Large ribosomal subunit protein bL21 from Salmonella schwarzengrund (strain CVM19633).